The chain runs to 163 residues: Protein NAG1 (163 aa).

A helical transmembrane segment spans residues 76–96; sequence ACFSVRIVLPLSLTISISALM.

The protein resides in the membrane. In terms of biological role, involved in yeast cell wall biogenesis. The polypeptide is Protein NAG1 (NAG1) (Saccharomyces cerevisiae (strain ATCC 204508 / S288c) (Baker's yeast)).